The chain runs to 650 residues: Acetyl-coenzyme A synthetase (650 aa).

CoA is bound by residues 191 to 194 (RGGR), Thr-311, and Asn-335. ATP is bound by residues 387-389 (GEP), 411-416 (DTWWQT), Asp-500, and Arg-515. Ser-523 provides a ligand contact to CoA. ATP is bound at residue Arg-526. Val-537, His-539, and Val-542 together coordinate Mg(2+). Arg-584 is a binding site for CoA. Lys-609 is modified (N6-acetyllysine).

Belongs to the ATP-dependent AMP-binding enzyme family. It depends on Mg(2+) as a cofactor. Acetylated. Deacetylation by the SIR2-homolog deacetylase activates the enzyme.

It carries out the reaction acetate + ATP + CoA = acetyl-CoA + AMP + diphosphate. In terms of biological role, catalyzes the conversion of acetate into acetyl-CoA (AcCoA), an essential intermediate at the junction of anabolic and catabolic pathways. AcsA undergoes a two-step reaction. In the first half reaction, AcsA combines acetate with ATP to form acetyl-adenylate (AcAMP) intermediate. In the second half reaction, it can then transfer the acetyl group from AcAMP to the sulfhydryl group of CoA, forming the product AcCoA. The chain is Acetyl-coenzyme A synthetase from Shewanella sp. (strain W3-18-1).